Reading from the N-terminus, the 435-residue chain is Histidine--tRNA ligase (435 aa).

The segment at 415–435 is disordered; that stretch reads SVPLSAFPGDYDRPTFEDFAE. A compositionally biased stretch (basic and acidic residues) spans 424-435; sequence DYDRPTFEDFAE.

Belongs to the class-II aminoacyl-tRNA synthetase family.

The protein resides in the cytoplasm. The catalysed reaction is tRNA(His) + L-histidine + ATP = L-histidyl-tRNA(His) + AMP + diphosphate + H(+). This is Histidine--tRNA ligase from Haloarcula marismortui (strain ATCC 43049 / DSM 3752 / JCM 8966 / VKM B-1809) (Halobacterium marismortui).